We begin with the raw amino-acid sequence, 403 residues long: GPI mannosyltransferase 1 (403 aa).

Residues Met1–Glu4 lie on the Cytoplasmic side of the membrane. Residues Glu5–Tyr25 form a helical membrane-spanning segment. The Lumenal segment spans residues Gln26–Gly78. A helical transmembrane segment spans residues Trp79–Met99. The Cytoplasmic segment spans residues Lys100–Arg110. A helical transmembrane segment spans residues Ala111 to Gly131. Residue Asn132 is a topological domain, lumenal. The chain crosses the membrane as a helical span at residues Ala133–Gln149. At Lys150–Tyr160 the chain is on the cytoplasmic side. The helical transmembrane segment at Gly161–Ile181 threads the bilayer. Residues Tyr182 to Gln193 lie on the Lumenal side of the membrane. A helical transmembrane segment spans residues Leu194–Ala214. The Cytoplasmic segment spans residues Met215 to Ala266. Residues Phe267–Phe287 form a helical membrane-spanning segment. Residues Asp288–Ser310 are Lumenal-facing. The helical transmembrane segment at Gln311–Trp331 threads the bilayer. Topologically, residues Lys332 to Gly334 are cytoplasmic. A helical transmembrane segment spans residues Leu335 to Leu355. Topologically, residues Glu356–Asn361 are lumenal. The helical transmembrane segment at Val362–Leu382 threads the bilayer. Residues Gly383–Asn403 lie on the Cytoplasmic side of the membrane.

Belongs to the PIGM family.

The protein localises to the endoplasmic reticulum membrane. It functions in the pathway glycolipid biosynthesis; glycosylphosphatidylinositol-anchor biosynthesis. Functionally, mannosyltransferase involved in glycosylphosphatidylinositol-anchor biosynthesis. Transfers the first alpha-1,4-mannose to GlcN-acyl-PI during GPI precursor assembly. Required for cell wall integrity. The polypeptide is GPI mannosyltransferase 1 (GPI14) (Saccharomyces cerevisiae (strain ATCC 204508 / S288c) (Baker's yeast)).